Consider the following 131-residue polypeptide: MAPSLWKGLVGIGLFALAHAAFSAAQHRSYMRLTEKEDESLPIDIVLQTLLAFAVTCYGIVHIAGEFKDMDATSELKNKTFDTLRNHPSFYVFNHRGRVLFRPSDTANSSNQDALSSNTSLKLRKLESLRR.

The Cytoplasmic segment spans residues 1–3 (MAP). The helical transmembrane segment at 4-22 (SLWKGLVGIGLFALAHAAF) threads the bilayer. At 23 to 43 (SAAQHRSYMRLTEKEDESLPI) the chain is on the lumenal side. Residues 44 to 63 (DIVLQTLLAFAVTCYGIVHI) traverse the membrane as a helical segment. At 64 to 131 (AGEFKDMDAT…KLRKLESLRR (68 aa)) the chain is on the cytoplasmic side. At serine 120 the chain carries Phosphoserine.

Belongs to the membrane magnesium transporter (TC 1.A.67) family. In terms of assembly, component of the ER membrane protein complex (EMC).

It is found in the endoplasmic reticulum membrane. The protein resides in the golgi apparatus membrane. Its subcellular location is the early endosome membrane. Its function is as follows. Part of the endoplasmic reticulum membrane protein complex (EMC) that enables the energy-independent insertion into endoplasmic reticulum membranes of newly synthesized membrane proteins. Preferentially accommodates proteins with transmembrane domains that are weakly hydrophobic or contain destabilizing features such as charged and aromatic residues. Involved in the cotranslational insertion of multi-pass membrane proteins in which stop-transfer membrane-anchor sequences become ER membrane spanning helices. It is also required for the post-translational insertion of tail-anchored/TA proteins in endoplasmic reticulum membranes. By mediating the proper cotranslational insertion of N-terminal transmembrane domains in an N-exo topology, with translocated N-terminus in the lumen of the ER, controls the topology of multi-pass membrane proteins like the G protein-coupled receptors. By regulating the insertion of various proteins in membranes, it is indirectly involved in many cellular processes. May be involved in Mg(2+) transport. The chain is ER membrane protein complex subunit 5 from Homo sapiens (Human).